The chain runs to 418 residues: Aspartate aminotransferase 1 (418 aa).

Lysine 264 is subject to N6-(pyridoxal phosphate)lysine.

It belongs to the class-I pyridoxal-phosphate-dependent aminotransferase family. In terms of assembly, homodimer. Requires pyridoxal 5'-phosphate as cofactor. Nodules, roots, stems and leaves, in decreasing order of aspartate aminotransferase 1 concentration. Is the predominant aspartate aminotransferase isoenzyme in roots.

It is found in the cytoplasm. The catalysed reaction is L-aspartate + 2-oxoglutarate = oxaloacetate + L-glutamate. Functionally, important for the metabolism of amino acids and Krebs-cycle related organic acids. In plants, it is involved in nitrogen metabolism and in aspects of carbon and energy metabolism. The protein is Aspartate aminotransferase 1 (AAT-1) of Medicago sativa (Alfalfa).